The following is a 308-amino-acid chain: Probable manganese-dependent inorganic pyrophosphatase (308 aa).

Mn(2+)-binding residues include H9, D13, D15, D75, H97, and D149.

The protein belongs to the PPase class C family. Mn(2+) is required as a cofactor.

The protein resides in the cytoplasm. The catalysed reaction is diphosphate + H2O = 2 phosphate + H(+). The polypeptide is Probable manganese-dependent inorganic pyrophosphatase (Enterococcus faecalis (strain ATCC 700802 / V583)).